Consider the following 250-residue polypeptide: Non-specific acid phosphatase (250 aa).

Positions 1–20 (MKSRYLLFFLPLIVAKYTSA) are cleaved as a signal peptide.

The protein belongs to the class A bacterial acid phosphatase family. As to quaternary structure, homodimer.

It is found in the periplasm. It carries out the reaction a phosphate monoester + H2O = an alcohol + phosphate. The sequence is that of Non-specific acid phosphatase (phoN) from Salmonella typhi.